Consider the following 607-residue polypeptide: Arginine--tRNA ligase (607 aa).

Residues 147 to 157 carry the 'HIGH' region motif; that stretch reads PNIAKEMHVGH.

This sequence belongs to the class-I aminoacyl-tRNA synthetase family. As to quaternary structure, monomer.

The protein localises to the cytoplasm. It carries out the reaction tRNA(Arg) + L-arginine + ATP = L-arginyl-tRNA(Arg) + AMP + diphosphate. The chain is Arginine--tRNA ligase from Prochlorococcus marinus (strain NATL1A).